The chain runs to 751 residues: Catalase-peroxidase (751 aa).

A cross-link (tryptophyl-tyrosyl-methioninium (Trp-Tyr) (with M-266)) is located at residues 92–240 (WHSAGTYRVT…VAAAHMGLIY (149 aa)). The Proton acceptor role is filled by His93. The tryptophyl-tyrosyl-methioninium (Tyr-Met) (with W-92) cross-link spans 240-266 (YVNPEGPDGVPDPIAAARDIRTTFHRM). His281 lines the heme b pocket.

Belongs to the peroxidase family. Peroxidase/catalase subfamily. As to quaternary structure, homodimer or homotetramer. Requires heme b as cofactor. Formation of the three residue Trp-Tyr-Met cross-link is important for the catalase, but not the peroxidase activity of the enzyme.

It is found in the cytoplasm. It carries out the reaction H2O2 + AH2 = A + 2 H2O. The enzyme catalyses 2 H2O2 = O2 + 2 H2O. In terms of biological role, bifunctional enzyme with both catalase and broad-spectrum peroxidase activity. The chain is Catalase-peroxidase from Phaeosphaeria nodorum (strain SN15 / ATCC MYA-4574 / FGSC 10173) (Glume blotch fungus).